The chain runs to 982 residues: Presequence protease, mitochondrial (982 aa).

The N-terminal 7 residues, 1–7 (MFQIRNY), are a transit peptide targeting the mitochondrion. Histidine 84 is a binding site for Zn(2+). Glutamate 87 acts as the Proton acceptor in catalysis. Residue histidine 88 participates in Zn(2+) binding. The active site involves glutamate 160. Glutamate 185 contacts Zn(2+).

The protein belongs to the peptidase M16 family. PreP subfamily. In terms of assembly, monomer and homodimer; homodimerization is induced by binding of the substrate. Requires Zn(2+) as cofactor.

Its subcellular location is the mitochondrion intermembrane space. It localises to the mitochondrion matrix. Functionally, degrades mitochondrial transit peptides after their cleavage in the intermembrane space or in the matrix, and presequence peptides; clearance of these peptides is required to keep the presequence processing machinery running. Preferentially cleaves the N-terminal side of paired basic amino acid residues. Also degrades other unstructured peptides. May function as an ATP-dependent peptidase as opposed to a metalloendopeptidase. In Kluyveromyces lactis (strain ATCC 8585 / CBS 2359 / DSM 70799 / NBRC 1267 / NRRL Y-1140 / WM37) (Yeast), this protein is Presequence protease, mitochondrial (CYM1).